A 203-amino-acid chain; its full sequence is Urease accessory protein UreG (203 aa).

GTP is bound at residue 14-21 (GPVGSGKT).

Belongs to the SIMIBI class G3E GTPase family. UreG subfamily. Homodimer. UreD, UreF and UreG form a complex that acts as a GTP-hydrolysis-dependent molecular chaperone, activating the urease apoprotein by helping to assemble the nickel containing metallocenter of UreC. The UreE protein probably delivers the nickel.

Its subcellular location is the cytoplasm. Its function is as follows. Facilitates the functional incorporation of the urease nickel metallocenter. This process requires GTP hydrolysis, probably effectuated by UreG. This chain is Urease accessory protein UreG, found in Sinorhizobium medicae (strain WSM419) (Ensifer medicae).